We begin with the raw amino-acid sequence, 229 residues long: Potassium/proton antiporter CemA (229 aa).

A run of 4 helical transmembrane segments spans residues 6–26 (AFIP…ISLC), 107–127 (IFNF…SFWG), 152–172 (FLIL…GWEL), and 190–210 (LSGL…YWIF).

This sequence belongs to the CemA family.

The protein resides in the plastid. Its subcellular location is the chloroplast inner membrane. It carries out the reaction K(+)(in) + H(+)(out) = K(+)(out) + H(+)(in). Contributes to K(+)/H(+) antiport activity by supporting proton efflux to control proton extrusion and homeostasis in chloroplasts in a light-dependent manner to modulate photosynthesis. Prevents excessive induction of non-photochemical quenching (NPQ) under continuous-light conditions. Indirectly promotes efficient inorganic carbon uptake into chloroplasts. The chain is Potassium/proton antiporter CemA from Aethionema cordifolium (Lebanon stonecress).